A 309-amino-acid chain; its full sequence is Tagatose-6-phosphate kinase (309 aa).

This sequence belongs to the carbohydrate kinase PfkB family. LacC subfamily.

The enzyme catalyses D-tagatofuranose 6-phosphate + ATP = D-tagatofuranose 1,6-bisphosphate + ADP + H(+). Its pathway is carbohydrate metabolism; D-tagatose 6-phosphate degradation; D-glyceraldehyde 3-phosphate and glycerone phosphate from D-tagatose 6-phosphate: step 1/2. The polypeptide is Tagatose-6-phosphate kinase (Streptococcus pneumoniae serotype 19F (strain G54)).